A 328-amino-acid polypeptide reads, in one-letter code: Glycerol-3-phosphate dehydrogenase [NAD(P)+] (328 aa).

NADPH-binding residues include W15, R35, R36, and K105. Residues K105 and G131 each coordinate sn-glycerol 3-phosphate. NADPH is bound at residue A135. Sn-glycerol 3-phosphate contacts are provided by K186, D239, S249, R250, and N251. K186 functions as the Proton acceptor in the catalytic mechanism. R250 lines the NADPH pocket. NADPH-binding residues include V270 and E272.

This sequence belongs to the NAD-dependent glycerol-3-phosphate dehydrogenase family.

It localises to the cytoplasm. It catalyses the reaction sn-glycerol 3-phosphate + NAD(+) = dihydroxyacetone phosphate + NADH + H(+). The enzyme catalyses sn-glycerol 3-phosphate + NADP(+) = dihydroxyacetone phosphate + NADPH + H(+). The protein operates within membrane lipid metabolism; glycerophospholipid metabolism. In terms of biological role, catalyzes the reduction of the glycolytic intermediate dihydroxyacetone phosphate (DHAP) to sn-glycerol 3-phosphate (G3P), the key precursor for phospholipid synthesis. This is Glycerol-3-phosphate dehydrogenase [NAD(P)+] from Deinococcus radiodurans (strain ATCC 13939 / DSM 20539 / JCM 16871 / CCUG 27074 / LMG 4051 / NBRC 15346 / NCIMB 9279 / VKM B-1422 / R1).